The sequence spans 140 residues: Large ribosomal subunit protein bL17 (140 aa).

The disordered stretch occupies residues Asp-119–Ala-140.

This sequence belongs to the bacterial ribosomal protein bL17 family. Part of the 50S ribosomal subunit. Contacts protein L32.

This chain is Large ribosomal subunit protein bL17, found in Zymomonas mobilis subsp. mobilis (strain ATCC 31821 / ZM4 / CP4).